A 109-amino-acid chain; its full sequence is Aquaporin-2 (109 aa).

Topologically, residues 1 to 6 are cytoplasmic; it reads SIAFSR. Residues 7–27 traverse the membrane as a helical segment; sequence AVFAEFLATLLFVFFGLGSAL. The Extracellular segment spans residues 28–35; it reads NWPSALPS. The helical transmembrane segment at 36–54 threads the bilayer; that stretch reads TLQIAMAFGLGIGTLVQAL. At 55–59 the chain is on the cytoplasmic side; it reads GHVSG. The segment at residues 60-69 is an intramembrane region (discontinuously helical); it reads AHINPAVTVA. The NPA 1 signature appears at 63 to 65; the sequence is NPA. Residues 70 to 80 lie on the Cytoplasmic side of the membrane; that stretch reads CLVGCHVSFLR. Residues 81–102 traverse the membrane as a helical segment; it reads AAFYVAAQLLGAVAGAALLHEI. Over 103–109 the chain is Extracellular; that stretch reads TPAEVRG.

The protein belongs to the MIP/aquaporin (TC 1.A.8) family. Homotetramer. Serine phosphorylation is necessary and sufficient for expression at the apical membrane. Endocytosis is not phosphorylation-dependent. In terms of processing, N-glycosylated.

Its subcellular location is the apical cell membrane. It localises to the basolateral cell membrane. The protein resides in the cell membrane. It is found in the cytoplasmic vesicle membrane. The protein localises to the golgi apparatus. Its subcellular location is the trans-Golgi network membrane. The catalysed reaction is H2O(in) = H2O(out). It catalyses the reaction glycerol(in) = glycerol(out). Functionally, forms a water-specific channel that provides the plasma membranes of renal collecting duct with high permeability to water, thereby permitting water to move in the direction of an osmotic gradient. Plays an essential role in renal water homeostasis. Could also be permeable to glycerol. The chain is Aquaporin-2 from Oryctolagus cuniculus (Rabbit).